A 384-amino-acid chain; its full sequence is Transcription factor 7 (384 aa).

Residues 1 to 16 (MPQLDSGGGGAGGGDD) are compositionally biased toward gly residues. A CTNNB1-binding region spans residues 1 to 59 (MPQLDSGGGGAGGGDDLGAPDELLAFQDEGEEQDDKSRDSAAGPERDLAELKSSLVNES). Disordered stretches follow at residues 1-88 (MPQL…LGRE), 133-183 (PPSG…QKQV), and 337-384 (SARD…MTVL). The segment covering 35-50 (DKSRDSAAGPERDLAE) has biased composition (basic and acidic residues). A compositionally biased stretch (gly residues) spans 62-78 (AAGGAGIPGVPGAGAGA). The HMG box DNA-binding region spans 269–337 (IKKPLNAFML…LHMQLYPGWS (69 aa)). The Nuclear localization signal signature appears at 344 to 348 (KKKRR). The span at 352 to 370 (KHQESTTGGKRNAFGTYPE) shows a compositional bias: basic and acidic residues. Low complexity predominate over residues 374-384 (APAPFLPMTVL).

It belongs to the TCF/LEF family. As to quaternary structure, binds the armadillo repeat of CTNNB1 and forms a stable complex. Interacts with TLE5, TLE1, TLE2, TLE3 and TLE4. Interacts with MLLT11. Long isoform interacts (via N-terminus) with SOX13; inhibits WNT-mediated transcriptional activity. Interacts with DAZAP2. Predominantly expressed in T-cells. Also detected in proliferating intestinal epithelial cells and in the basal epithelial cells of mammary gland epithelium.

It localises to the nucleus. In terms of biological role, transcriptional activator involved in T-cell lymphocyte differentiation. Necessary for the survival of CD4(+) CD8(+) immature thymocytes. Isoforms lacking the N-terminal CTNNB1 binding domain cannot fulfill this role. Binds to the T-lymphocyte-specific enhancer element (5'-WWCAAAG-3') found in the promoter of the CD3E gene. Represses expression of the T-cell receptor gamma gene in alpha-beta T-cell lineages. Required for the development of natural killer receptor-positive lymphoid tissue inducer T-cells. TLE1, TLE2, TLE3 and TLE4 repress transactivation mediated by TCF7 and CTNNB1. May also act as feedback transcriptional repressor of CTNNB1 and TCF7L2 target genes. This chain is Transcription factor 7, found in Homo sapiens (Human).